Consider the following 413-residue polypeptide: O-methyltransferase kntB (413 aa).

Residues 255–256 (GG), D280, 302–303 (NF), and R319 each bind S-adenosyl-L-methionine. Residue H322 is the Proton acceptor of the active site.

Belongs to the class I-like SAM-binding methyltransferase superfamily. Cation-independent O-methyltransferase family. S-adenosyl-L-methionine is required as a cofactor.

Its pathway is secondary metabolite biosynthesis. In terms of biological role, non-reducing polyketide synthase; part of the gene cluster that mediates the biosynthesis of the bicoumarin kotanin. The non-reducing polyketide synthase ktnS first catalyzes the formation of the pentaketidic 4,7-dihydroxy-5-methylcoumarin from acetyl coenzyme A and 4 malonyl coenzyme A molecules. Further O-methylation by ktnB leads to the formation of 7-demethylsiderin. Then, an oxidative phenol coupling catalyzed by the cytochrome P450 monooxygenase ktnC forms the 8,8'-dimer P-orlandin via dimerization the monomeric precursor, 7-demethylsiderin. P-orlandin is subsequently O-methylated in a stepwise fashion to demethylkotanin and kotanin. The sequence is that of O-methyltransferase kntB from Aspergillus niger (strain ATCC MYA-4892 / CBS 513.88 / FGSC A1513).